The sequence spans 596 residues: MAQAWAFLLPVLVLGSYVTSLFFPSYISNPLCGGDGGRSLFLCAQAPKDQDPSPAVSTMYKTAFHFQPAKNWMNDPSGPMYFNGIYHEFYQYNLNGPIFGDIVWGHSVSTDLVNWIGLEPALVRDTPSDIDGCWTGSVTILPGGKPIIIYTGGDIDQHQAQNIAFPKNRSDPYLREWIKAPNNPVLRPDGPGMNSIEFRDPTTGWIGPDGLWRMAVGGELNGYSAALLYKSEDFLNWTKVDHPLYSHNGSNMWECPDFFAVLPGNNAGLDLSAAIPQGAKHALKMSVDSVDKYMIGVYDLQRDAFVPDNVVDDRRLWLRIDYGTFYASKSFFDSNKNRRIIWGWSRETDSPSDDLEKGWAGLHTIPRTIWLAGDGKQLLQWPVEEIESLRTNEISHQGIELNKGDLFEIKEVDAFQADVEIVFELASIDDADSFDPSWLLDPEKHCGEAGASVPGGIGPFGLVILASDNMDEHTEVYFRVYKSQEKYMVLMCSDLRRSSLRPDLEKPAYGGFFEFDLEKERKISLRTLIDRSAVESFGGGGRVCITSRVYPAVLADVGRAHIYAFNNGSATVRVPQLSAWTMRKAQVNVEKGWSAI.

A signal peptide spans 1 to 20; that stretch reads MAQAWAFLLPVLVLGSYVTS. Residue Asp75 is part of the active site. N-linked (GlcNAc...) asparagine glycans are attached at residues Asn168, Asn236, and Asn248. A disulfide bridge links Cys446 with Cys492. N-linked (GlcNAc...) asparagine glycosylation is present at Asn567.

It belongs to the glycosyl hydrolase 32 family.

It carries out the reaction Hydrolysis of terminal, non-reducing (2-&gt;1)-linked beta-D-fructofuranose residues in fructans.. Inhibited by sucrose. Its function is as follows. Hydrolyzes inulin-type beta-(2,1)-fructans. May play a role as a beta-(2,1)-trimmer during graminan biosynthesis. The chain is Fructan 1-exohydrolase from Aegilops tauschii (Tausch's goatgrass).